A 339-amino-acid polypeptide reads, in one-letter code: Uroporphyrinogen decarboxylase (339 aa).

Substrate is bound by residues 23-27 (RQAGR), Asp72, Tyr147, Thr202, and His315.

Belongs to the uroporphyrinogen decarboxylase family. Homodimer.

Its subcellular location is the cytoplasm. The enzyme catalyses uroporphyrinogen III + 4 H(+) = coproporphyrinogen III + 4 CO2. It participates in porphyrin-containing compound metabolism; protoporphyrin-IX biosynthesis; coproporphyrinogen-III from 5-aminolevulinate: step 4/4. In terms of biological role, catalyzes the decarboxylation of four acetate groups of uroporphyrinogen-III to yield coproporphyrinogen-III. This is Uroporphyrinogen decarboxylase from Geotalea uraniireducens (strain Rf4) (Geobacter uraniireducens).